The following is a 307-amino-acid chain: Aspartate carbamoyltransferase catalytic subunit (307 aa).

The carbamoyl phosphate site is built by Arg-58 and Thr-59. Residue Lys-86 participates in L-aspartate binding. Positions 108, 136, and 139 each coordinate carbamoyl phosphate. Arg-169 and Arg-223 together coordinate L-aspartate. Residues Gly-264 and Pro-265 each contribute to the carbamoyl phosphate site.

This sequence belongs to the aspartate/ornithine carbamoyltransferase superfamily. ATCase family. As to quaternary structure, heterododecamer (2C3:3R2) of six catalytic PyrB chains organized as two trimers (C3), and six regulatory PyrI chains organized as three dimers (R2).

It catalyses the reaction carbamoyl phosphate + L-aspartate = N-carbamoyl-L-aspartate + phosphate + H(+). It functions in the pathway pyrimidine metabolism; UMP biosynthesis via de novo pathway; (S)-dihydroorotate from bicarbonate: step 2/3. In terms of biological role, catalyzes the condensation of carbamoyl phosphate and aspartate to form carbamoyl aspartate and inorganic phosphate, the committed step in the de novo pyrimidine nucleotide biosynthesis pathway. This is Aspartate carbamoyltransferase catalytic subunit from Syntrophus aciditrophicus (strain SB).